The following is a 356-amino-acid chain: tRNA N6-adenosine threonylcarbamoyltransferase (356 aa).

A divalent metal cation contacts are provided by His124, His128, and Tyr145. Substrate contacts are provided by residues 145–149, Asp177, Gly192, Glu196, and Asn287; that span reads YVSGG. Residue Asp315 participates in a divalent metal cation binding.

Belongs to the KAE1 / TsaD family. In terms of assembly, component of the EKC/KEOPS complex composed of at least BUD32, CGI121, GON7, KAE1 and PCC1; the whole complex dimerizes. It depends on a divalent metal cation as a cofactor.

The protein resides in the cytoplasm. It is found in the nucleus. The catalysed reaction is L-threonylcarbamoyladenylate + adenosine(37) in tRNA = N(6)-L-threonylcarbamoyladenosine(37) in tRNA + AMP + H(+). In terms of biological role, component of the EKC/KEOPS complex that is required for the formation of a threonylcarbamoyl group on adenosine at position 37 (t(6)A37) in tRNAs that read codons beginning with adenine. The complex is probably involved in the transfer of the threonylcarbamoyl moiety of threonylcarbamoyl-AMP (TC-AMP) to the N6 group of A37. KAE1 likely plays a direct catalytic role in this reaction, but requires other protein(s) of the complex to fulfill this activity. The EKC/KEOPS complex also promotes both telomere uncapping and telomere elongation. The complex is required for efficient recruitment of transcriptional coactivators. The chain is tRNA N6-adenosine threonylcarbamoyltransferase from Yarrowia lipolytica (strain CLIB 122 / E 150) (Yeast).